A 453-amino-acid polypeptide reads, in one-letter code: Fibrinogen gamma chain (453 aa).

The first 26 residues, 1 to 26, serve as a signal peptide directing secretion; it reads MSWSLHPRNLILYFYALLFLSSTCVA. Serine 68 carries the post-translational modification Phosphoserine; by FAM20C. Asparagine 78 carries an N-linked (GlcNAc...) (complex) asparagine glycan. Residues 170–416 enclose the Fibrinogen C-terminal domain; it reads QIHDITGKDC…KTTMKIIPFN (247 aa). Cysteine 179 and cysteine 208 are oxidised to a cystine. An N-linked (GlcNAc...) asparagine; in variant Asahi glycan is attached at asparagine 334. Ca(2+)-binding residues include aspartate 344, aspartate 346, phenylalanine 348, and glycine 350. A disulfide bond links cysteine 352 and cysteine 365. Positions 400–422 are gamma-chain polymerization, binding amino end of another fibrin alpha chain; that stretch reads TRWYSMKKTTMKIIPFNRLTIGE. A platelet aggregation and Staphylococcus clumping region spans residues 423–437; sequence GQQHHLGGAKQVRPE. An Isoglutamyl lysine isopeptide (Gln-Lys) (interchain with K-432) cross-link involves residue glutamine 424. The segment at 424–453 is disordered; it reads QQHHLGGAKQVRPEHPAETEYDSLYPEDDL. Lysine 432 is covalently cross-linked (Isoglutamyl lysine isopeptide (Lys-Gln) (interchain with Q-424)). Acidic residues predominate over residues 442–453; sequence TEYDSLYPEDDL. A sulfotyrosine mark is found at tyrosine 444 and tyrosine 448.

Heterohexamer; disulfide linked. Contains 2 sets of 3 non-identical chains (alpha, beta and gamma). The 2 heterotrimers are in head to head conformation with the N-termini in a small central domain. Conversion of fibrinogen to fibrin is triggered by thrombin, which cleaves fibrinopeptides A and B from alpha and beta chains, and thus exposes the N-terminal polymerization sites responsible for the formation of the soft clot. The soft clot is converted into the hard clot by factor XIIIA which catalyzes the epsilon-(gamma-glutamyl)lysine cross-linking between gamma chains (stronger) and between alpha chains (weaker) of different monomers. Post-translationally, sulfation of C-terminal tyrosines increases affinity for thrombin. In terms of tissue distribution, detected in blood plasma (at protein level).

Its subcellular location is the secreted. Together with fibrinogen alpha (FGA) and fibrinogen beta (FGB), polymerizes to form an insoluble fibrin matrix. Has a major function in hemostasis as one of the primary components of blood clots. In addition, functions during the early stages of wound repair to stabilize the lesion and guide cell migration during re-epithelialization. Was originally thought to be essential for platelet aggregation, based on in vitro studies using anticoagulated blood. However, subsequent studies have shown that it is not absolutely required for thrombus formation in vivo. Enhances expression of SELP in activated platelets via an ITGB3-dependent pathway. Maternal fibrinogen is essential for successful pregnancy. Fibrin deposition is also associated with infection, where it protects against IFNG-mediated hemorrhage. May also facilitate the antibacterial immune response via both innate and T-cell mediated pathways. This is Fibrinogen gamma chain (FGG) from Homo sapiens (Human).